The primary structure comprises 430 residues: MKTTIKQAKDHLNQDVTIGAWLTNKRSSGKIAFLQLRDGTGFMQGVVVKSEVDEEVFKLAKEITQESSLYVTGTITEDNRSDLGYEMQVKSIEVISEAHDYPITPKNHGTEFLMDHRHLWLRSKKQHAVMKIRNEVIRATYEFFNKDGFTKVDPPILTASAPEGTSELFLTKYFDQDAFLSQSGQLYLEAAAMAHGKVFSFGPTFRAEKSKTRRHLIEFWMIEGEMAFTNHAESLEIQEQYVTHVVKSVLENCKLELKILERDTSKLEKVATPFPRISYDDAIEFLKAEGFDDIEWGEDFGAPHETAIANHYDLPVFITNYPTKIKPFYMQPNPENEETVLCADLIAPEGYGEIIGGSERVDDLELLEQRVKEHGLDEEAYSYYLDLRRYGSVPHCGFGLGLERTVAWISGVEHVRETAPFPRLLNRLYP.

It belongs to the class-II aminoacyl-tRNA synthetase family. Homodimer.

The protein resides in the cytoplasm. The enzyme catalyses tRNA(Asn) + L-asparagine + ATP = L-asparaginyl-tRNA(Asn) + AMP + diphosphate + H(+). This chain is Asparagine--tRNA ligase, found in Staphylococcus aureus (strain bovine RF122 / ET3-1).